The primary structure comprises 223 residues: UPF0441 protein YgiB (223 aa).

Positions 201–223 (ESVAKQSAMQRSAAGTSTRSMGG) are disordered. A compositionally biased stretch (polar residues) spans 204–223 (AKQSAMQRSAAGTSTRSMGG).

Belongs to the UPF0441 family.

The chain is UPF0441 protein YgiB from Salmonella arizonae (strain ATCC BAA-731 / CDC346-86 / RSK2980).